A 293-amino-acid chain; its full sequence is MVWRTLVASNFSTCPNGSIQWIWDVFGECAQDGWDEASVALGLVSIFCFAASTFPQYIKACKTGNMDQALSLWFLLGWIGGDSCNLIGSFLADQLPLQTYTAVYYVLADLLMLTLYFHYKFKKQPSLLSAPINSVLLFILGTVCITPLLSSTDPVAVPREGFRGRTLLSVEPGNKPFTKKEVVGFVIGSASSVLYLLSRLPQIRTNFVRQSTQGISYSLFALVMLGNTLYGLSVLLKNPEVGQSEGSYLLHHLPWLVGSLGVLLLDTIISIQFLVYRSHDADAASEREPLLPS.

Topologically, residues 1–37 are lumenal; the sequence is MVWRTLVASNFSTCPNGSIQWIWDVFGECAQDGWDEA. N-linked (GlcNAc...) asparagine glycosylation is present at asparagine 10. The region spanning 34–100 is the PQ-loop 1 domain; sequence WDEASVALGL…LADQLPLQTY (67 aa). Residues 38-58 traverse the membrane as a helical segment; that stretch reads SVALGLVSIFCFAASTFPQYI. At 59-71 the chain is on the cytoplasmic side; it reads KACKTGNMDQALS. Residues 72 to 92 traverse the membrane as a helical segment; it reads LWFLLGWIGGDSCNLIGSFLA. The Lumenal segment spans residues 93 to 96; it reads DQLP. A helical membrane pass occupies residues 97-117; that stretch reads LQTYTAVYYVLADLLMLTLYF. The Cytoplasmic portion of the chain corresponds to 118–126; sequence HYKFKKQPS. Residues 127 to 147 traverse the membrane as a helical segment; it reads LLSAPINSVLLFILGTVCITP. Residues 148 to 182 are Lumenal-facing; sequence LLSSTDPVAVPREGFRGRTLLSVEPGNKPFTKKEV. Residues 183-203 form a helical membrane-spanning segment; sequence VGFVIGSASSVLYLLSRLPQI. Residues 191 to 243 form the PQ-loop 2 domain; it reads SSVLYLLSRLPQIRTNFVRQSTQGISYSLFALVMLGNTLYGLSVLLKNPEVGQ. Over 204–214 the chain is Cytoplasmic; the sequence is RTNFVRQSTQG. The helical transmembrane segment at 215–235 threads the bilayer; that stretch reads ISYSLFALVMLGNTLYGLSVL. Residues 236 to 254 lie on the Lumenal side of the membrane; that stretch reads LKNPEVGQSEGSYLLHHLP. A helical membrane pass occupies residues 255–275; that stretch reads WLVGSLGVLLLDTIISIQFLV. Residues 276–293 lie on the Cytoplasmic side of the membrane; that stretch reads YRSHDADAASEREPLLPS. The Di-leucine motif motif lies at 290–291; that stretch reads LL.

The protein belongs to the laat-1 family.

The protein localises to the lysosome membrane. Functionally, amino acid transporter that specifically mediates the pH-dependent export of the cationic amino acids arginine, histidine and lysine from lysosomes. In Rattus norvegicus (Rat), this protein is Lysosomal amino acid transporter 1 homolog (Slc66a1).